Consider the following 380-residue polypeptide: Cytochrome b (380 aa).

4 helical membrane-spanning segments follow: residues 34-54 (FGSLLGICLATQILTGLLLAM), 78-99 (WLIRNLHANGASFFFICVYLHI), 114-134 (WNTGILLLLTLMATAFVGYVL), and 179-199 (FFALHFLLPFAIAGLTLIHLT). Heme b is bound by residues H84 and H98. Heme b-binding residues include H183 and H197. Position 202 (H202) interacts with a ubiquinone. 4 helical membrane-spanning segments follow: residues 227 to 247 (LKDALGFMLMFLPLTTLALFS), 289 to 309 (LGGVLALAASVLILFLSPLLH), 321 to 341 (LSQLLFWTLVANLFILTWVGS), and 348 to 368 (FIIIGQLASLTYFTILLILFP).

This sequence belongs to the cytochrome b family. As to quaternary structure, the cytochrome bc1 complex contains 11 subunits: 3 respiratory subunits (MT-CYB, CYC1 and UQCRFS1), 2 core proteins (UQCRC1 and UQCRC2) and 6 low-molecular weight proteins (UQCRH/QCR6, UQCRB/QCR7, UQCRQ/QCR8, UQCR10/QCR9, UQCR11/QCR10 and a cleavage product of UQCRFS1). This cytochrome bc1 complex then forms a dimer. Heme b serves as cofactor.

It localises to the mitochondrion inner membrane. Functionally, component of the ubiquinol-cytochrome c reductase complex (complex III or cytochrome b-c1 complex) that is part of the mitochondrial respiratory chain. The b-c1 complex mediates electron transfer from ubiquinol to cytochrome c. Contributes to the generation of a proton gradient across the mitochondrial membrane that is then used for ATP synthesis. This Oceanites oceanicus (Wilson's storm petrel) protein is Cytochrome b (MT-CYB).